The following is a 165-amino-acid chain: Crossover junction endodeoxyribonuclease RuvC (165 aa).

Catalysis depends on residues D7, E68, and H142. The Mg(2+) site is built by D7, E68, and H142.

It belongs to the RuvC family. Homodimer which binds Holliday junction (HJ) DNA. The HJ becomes 2-fold symmetrical on binding to RuvC with unstacked arms; it has a different conformation from HJ DNA in complex with RuvA. In the full resolvosome a probable DNA-RuvA(4)-RuvB(12)-RuvC(2) complex forms which resolves the HJ. Requires Mg(2+) as cofactor.

The protein localises to the cytoplasm. The enzyme catalyses Endonucleolytic cleavage at a junction such as a reciprocal single-stranded crossover between two homologous DNA duplexes (Holliday junction).. In terms of biological role, the RuvA-RuvB-RuvC complex processes Holliday junction (HJ) DNA during genetic recombination and DNA repair. Endonuclease that resolves HJ intermediates. Cleaves cruciform DNA by making single-stranded nicks across the HJ at symmetrical positions within the homologous arms, yielding a 5'-phosphate and a 3'-hydroxyl group; requires a central core of homology in the junction. The consensus cleavage sequence is 5'-(A/T)TT(C/G)-3'. Cleavage occurs on the 3'-side of the TT dinucleotide at the point of strand exchange. HJ branch migration catalyzed by RuvA-RuvB allows RuvC to scan DNA until it finds its consensus sequence, where it cleaves and resolves the cruciform DNA. The protein is Crossover junction endodeoxyribonuclease RuvC of Anaplasma marginale (strain St. Maries).